The following is an 822-amino-acid chain: Lysine-specific histone demethylase 2 (822 aa).

A compositionally biased stretch (basic residues) spans 1 to 11 (MATPRGRTKKK). Residues 1-47 (MATPRGRTKKKASFDHSPDSLPLRSSGRQAKKKATETTDEDEDGGSE) form a disordered region. Serine 13, serine 17, and serine 26 each carry phosphoserine. Cysteine 53, cysteine 58, cysteine 65, cysteine 73, histidine 84, histidine 90, cysteine 92, cysteine 95, cysteine 142, cysteine 147, cysteine 169, and cysteine 185 together coordinate Zn(2+). A CW-type zinc finger spans residues 133-193 (DQQLPYWVQC…HCSLPEDLRV (61 aa)). Position 247 is a phosphoserine (serine 247). Positions 273–292 (YQPNECGKALCVRPDVMELD) are GLYR1-binding. The SWIRM domain maps to 275–373 (PNECGKALCV…TGVLSVGADQ (99 aa)). 383–439 (KSVIIIGAGPAGLAAARQLHNFGIKVTVLEAKDRIGGRVWDDKSFKGVTVGRGAQIV) lines the FAD pocket. Histone H3-binding stretches follow at residues 438-467 (IVNGCINNPVALMCEQLGISMHKFGERCDL), 487-498 (FNALLDVVSEWR), and 538-572 (FHLSNLEYACGSNLHQVSARSWDHNEFFAQFAGDH). The GLYR1-binding stretch occupies residues 564–566 (FFA). FAD contacts are provided by residues valine 598, glutamate 795, and 803–805 (QTV). The interval 798-814 (NRHFPQTVTGAYLSGVR) is GLYR1-binding.

The protein belongs to the flavin monoamine oxidase family. Interacts with its cofactor GLYR1 at nucleosomes; this interaction stimulates H3K4me1 and H3K4me2 demethylation. In contrast to KDM1A, does not form a complex with RCOR1/CoREST. Possible accessory component of the polycomb repressive deubiquitinase (PR-DUB) complex, at least composed of BAP1, one of ASXL1, ASXL2 or (probably) ASXL3 and one of MBD5 or MBD6. The PR-DUB core associates with a number of accessory proteins, including FOXK1, FOXK2, KDM1B, HCFC1 and OGT; KDM1B specifically associates with ASXL2 PR-DUB complexes. FAD is required as a cofactor. Zn(2+) serves as cofactor.

Its subcellular location is the nucleus. It localises to the chromosome. It catalyses the reaction N(6),N(6)-dimethyl-L-lysyl(4)-[histone H3] + 2 A + 2 H2O = L-lysyl(4)-[histone H3] + 2 formaldehyde + 2 AH2. The enzyme catalyses N(6)-methyl-L-lysyl(4)-[histone H3] + A + H2O = L-lysyl(4)-[histone H3] + formaldehyde + AH2. With respect to regulation, histone H3K4me1 and H3K4me2 demethylase activity is inhibited by DNA, this inhibition is released in complex with GLYR1. Histone demethylase that demethylates 'Lys-4' of histone H3, a specific tag for epigenetic transcriptional activation, thereby acting as a corepressor. Required for de novo DNA methylation of a subset of imprinted genes during oogenesis. Acts by oxidizing the substrate by FAD to generate the corresponding imine that is subsequently hydrolyzed. Demethylates both mono- and di-methylated 'Lys-4' of histone H3. Has no effect on tri-methylated 'Lys-4', mono-, di- or tri-methylated 'Lys-9', mono-, di- or tri-methylated 'Lys-27', mono-, di- or tri-methylated 'Lys-36' of histone H3, or on mono-, di- or tri-methylated 'Lys-20' of histone H4. Alone, it is unable to demethylate H3K4me on nucleosomes and requires the presence of GLYR1 to achieve such activity, they form a multifunctional enzyme complex that modifies transcribed chromatin and facilitates Pol II transcription through nucleosomes. In Homo sapiens (Human), this protein is Lysine-specific histone demethylase 2.